Reading from the N-terminus, the 107-residue chain is MESKFAHIIVFFLLATSFETLLARKESDGPEVIELQKEFECNGKQRWPELIGVPTKLAKGIIEKENSLITNVQILLNGSPVTMDYRCNRVRLFDNILGDVVQIPRVA.

The signal sequence occupies residues methionine 1 to alanine 23. A propeptide spanning residues arginine 24–glutamine 36 is cleaved from the precursor.

The protein belongs to the protease inhibitor I13 (potato type I serine protease inhibitor) family. In terms of assembly, heterogeneous tetramers of similar chains.

Functionally, inhibits both chymotrypsin and trypsin. This chain is Wound-induced proteinase inhibitor 1, found in Solanum tuberosum (Potato).